The sequence spans 130 residues: Small ribosomal subunit protein uS8A (130 aa).

This sequence belongs to the universal ribosomal protein uS8 family. In terms of assembly, component of the small ribosomal subunit (SSU). Mature yeast ribosomes consist of a small (40S) and a large (60S) subunit. The 40S small subunit contains 1 molecule of ribosomal RNA (18S rRNA) and 33 different proteins (encoded by 57 genes). The large 60S subunit contains 3 rRNA molecules (25S, 5.8S and 5S rRNA) and 46 different proteins (encoded by 81 genes).

It localises to the cytoplasm. Its function is as follows. Component of the ribosome, a large ribonucleoprotein complex responsible for the synthesis of proteins in the cell. The small ribosomal subunit (SSU) binds messenger RNAs (mRNAs) and translates the encoded message by selecting cognate aminoacyl-transfer RNA (tRNA) molecules. The large subunit (LSU) contains the ribosomal catalytic site termed the peptidyl transferase center (PTC), which catalyzes the formation of peptide bonds, thereby polymerizing the amino acids delivered by tRNAs into a polypeptide chain. The nascent polypeptides leave the ribosome through a tunnel in the LSU and interact with protein factors that function in enzymatic processing, targeting, and the membrane insertion of nascent chains at the exit of the ribosomal tunnel. This is Small ribosomal subunit protein uS8A from Saccharomyces cerevisiae (strain ATCC 204508 / S288c) (Baker's yeast).